Consider the following 319-residue polypeptide: Molybdenum cofactor biosynthesis bifunctional protein (319 aa).

The molybdenum cofactor biosynthesis protein C stretch occupies residues 1–145 (MIDVGDKAVT…GKSGHWQRPA (145 aa)). Substrate-binding positions include 61–63 (LCH) and 99–100 (ME). Asp-114 is a catalytic residue. The segment at 146 to 319 (IAPDVAPTGA…KGADHGTVKG (174 aa)) is molybdenum cofactor biosynthesis protein B.

This sequence in the N-terminal section; belongs to the MoaC family. The protein in the C-terminal section; belongs to the MoaB/Mog family.

The enzyme catalyses (8S)-3',8-cyclo-7,8-dihydroguanosine 5'-triphosphate = cyclic pyranopterin phosphate + diphosphate. The protein operates within cofactor biosynthesis; molybdopterin biosynthesis. Catalyzes the conversion of (8S)-3',8-cyclo-7,8-dihydroguanosine 5'-triphosphate to cyclic pyranopterin monophosphate (cPMP). The protein is Molybdenum cofactor biosynthesis bifunctional protein (moaCB) of Synechococcus elongatus (strain ATCC 33912 / PCC 7942 / FACHB-805) (Anacystis nidulans R2).